Reading from the N-terminus, the 103-residue chain is Small ribosomal subunit protein uS10 (103 aa).

The protein belongs to the universal ribosomal protein uS10 family. Part of the 30S ribosomal subunit.

In terms of biological role, involved in the binding of tRNA to the ribosomes. The polypeptide is Small ribosomal subunit protein uS10 (Verminephrobacter eiseniae (strain EF01-2)).